The chain runs to 198 residues: MTSQIKLIVGLGNPGPEYAKTRHNAGAWYVEQLARWHNVSLREEPKFFGHTARIQVDGQDVRLLIPNTYMNLSGKAVAALARFYQIEPEAMLVAHDELDLPPGIAKFKQGGGHGGHNGLKDIIARMGNNNNFFRLRLGIGHPGTKELVAGFVLTKAPSSEQSLIDAALDESLRATDILFKQDMTKAMNRLHSFKAEKV.

Tyr18 contributes to the tRNA binding site. Catalysis depends on His23, which acts as the Proton acceptor. TRNA contacts are provided by Tyr69, Asn71, and Asn117.

The protein belongs to the PTH family. Monomer.

Its subcellular location is the cytoplasm. It catalyses the reaction an N-acyl-L-alpha-aminoacyl-tRNA + H2O = an N-acyl-L-amino acid + a tRNA + H(+). Functionally, hydrolyzes ribosome-free peptidyl-tRNAs (with 1 or more amino acids incorporated), which drop off the ribosome during protein synthesis, or as a result of ribosome stalling. Its function is as follows. Catalyzes the release of premature peptidyl moieties from peptidyl-tRNA molecules trapped in stalled 50S ribosomal subunits, and thus maintains levels of free tRNAs and 50S ribosomes. In Aeromonas hydrophila subsp. hydrophila (strain ATCC 7966 / DSM 30187 / BCRC 13018 / CCUG 14551 / JCM 1027 / KCTC 2358 / NCIMB 9240 / NCTC 8049), this protein is Peptidyl-tRNA hydrolase.